The sequence spans 150 residues: Large ribosomal subunit protein uL15 (150 aa).

The interval 12–43 (AKKRKKRVGCGESSGHGKTSGRGHKGQKARAG) is disordered. The span at 30–39 (TSGRGHKGQK) shows a compositional bias: basic residues.

This sequence belongs to the universal ribosomal protein uL15 family. Part of the 50S ribosomal subunit.

Functionally, binds to the 23S rRNA. This chain is Large ribosomal subunit protein uL15, found in Methylacidiphilum infernorum (isolate V4) (Methylokorus infernorum (strain V4)).